Consider the following 387-residue polypeptide: Early growth response protein 3 (387 aa).

The disordered stretch occupies residues 241–283 (PGFGSLPQPPLTLKPIRPRKYPNRPSKTPLHERPHACPAEGCD). Positions 269-283 (PLHERPHACPAEGCD) are enriched in basic and acidic residues. 3 consecutive C2H2-type zinc fingers follow at residues 275–299 (HACP…LRIH), 305–327 (FQCR…IRTH), and 333–355 (FACE…AKIH). Positions 348–387 (RKRHAKIHLKQKEKKSEKGGAPSASSAPTVSLAPVVTTCA) are disordered. Over residues 350–360 (RHAKIHLKQKE) the composition is skewed to basic residues.

This sequence belongs to the EGR C2H2-type zinc-finger protein family.

The protein resides in the nucleus. Probable transcription factor involved in muscle spindle development. The protein is Early growth response protein 3 (Egr3) of Mus musculus (Mouse).